Reading from the N-terminus, the 232-residue chain is Chaperone protein CssC (232 aa).

The first 20 residues, 1–20 (MKSKLIILLTLVPFSSFSTG), serve as a signal peptide directing secretion.

The protein belongs to the periplasmic pilus chaperone family.

It is found in the periplasm. Functionally, involved in the biogenesis of the CS6 fimbria. This Escherichia coli protein is Chaperone protein CssC (cssC).